Consider the following 332-residue polypeptide: uncharacterized protein (332 aa).

Residues 1–32 (MSRDRGARGLRKYGRFALATGAATALSLTASG) form the signal peptide. The N-palmitoyl cysteine moiety is linked to residue Cys33. Cys33 carries the S-diacylglycerol cysteine lipid modification.

Its subcellular location is the cell membrane. This is an uncharacterized protein from Streptomyces avermitilis (strain ATCC 31267 / DSM 46492 / JCM 5070 / NBRC 14893 / NCIMB 12804 / NRRL 8165 / MA-4680).